The sequence spans 381 residues: Sterol 24-C-methyltransferase ERG6A (381 aa).

It belongs to the class I-like SAM-binding methyltransferase superfamily. Erg6/SMT family.

It catalyses the reaction lanosterol + S-adenosyl-L-methionine = eburicol + S-adenosyl-L-homocysteine + H(+). Its pathway is steroid metabolism; ergosterol biosynthesis. In terms of biological role, sterol 24-C-methyltransferase; part of the third module of ergosterol biosynthesis pathway that includes the late steps of the pathway. ERG6A and ERG6B methylate lanosterol at C-24 to produce eburicol. The third module or late pathway involves the ergosterol synthesis itself through consecutive reactions that mainly occur in the endoplasmic reticulum (ER) membrane. Firstly, the squalene synthase ERG9 catalyzes the condensation of 2 farnesyl pyrophosphate moieties to form squalene, which is the precursor of all steroids. Squalene synthase is crucial for balancing the incorporation of farnesyl diphosphate (FPP) into sterol and nonsterol isoprene synthesis. Secondly, squalene is converted into lanosterol by the consecutive action of the squalene epoxidase ERG1 and the lanosterol synthase ERG7. Then, the delta(24)-sterol C-methyltransferase ERG6 methylates lanosterol at C-24 to produce eburicol. Eburicol is the substrate of the sterol 14-alpha demethylase encoded by CYP51A, CYP51B and CYP51C, to yield 4,4,24-trimethyl ergosta-8,14,24(28)-trienol. CYP51B encodes the enzyme primarily responsible for sterol 14-alpha-demethylation, and plays an essential role in ascospore formation. CYP51A encodes an additional sterol 14-alpha-demethylase, induced on ergosterol depletion and responsible for the intrinsic variation in azole sensitivity. The third CYP51 isoform, CYP51C, does not encode a sterol 14-alpha-demethylase, but is required for full virulence on host wheat ears. The C-14 reductase ERG24 then reduces the C14=C15 double bond which leads to 4,4-dimethylfecosterol. A sequence of further demethylations at C-4, involving the C-4 demethylation complex containing the C-4 methylsterol oxidases ERG25, the sterol-4-alpha-carboxylate 3-dehydrogenase ERG26 and the 3-keto-steroid reductase ERG27, leads to the production of fecosterol via 4-methylfecosterol. ERG28 has a role as a scaffold to help anchor ERG25, ERG26 and ERG27 to the endoplasmic reticulum. The C-8 sterol isomerase ERG2 then catalyzes the reaction which results in unsaturation at C-7 in the B ring of sterols and thus converts fecosterol to episterol. The sterol-C5-desaturases ERG3A and ERG3BB then catalyze the introduction of a C-5 double bond in the B ring to produce 5-dehydroepisterol. The C-22 sterol desaturases ERG5A and ERG5B further convert 5-dehydroepisterol into ergosta-5,7,22,24(28)-tetraen-3beta-ol by forming the C-22(23) double bond in the sterol side chain. Finally, ergosta-5,7,22,24(28)-tetraen-3beta-ol is substrate of the C-24(28) sterol reductase ERG4 to produce ergosterol. The polypeptide is Sterol 24-C-methyltransferase ERG6A (FG02783.1) (Gibberella zeae (strain ATCC MYA-4620 / CBS 123657 / FGSC 9075 / NRRL 31084 / PH-1) (Wheat head blight fungus)).